A 70-amino-acid polypeptide reads, in one-letter code: UPF0270 protein VP2791 (70 aa).

Belongs to the UPF0270 family.

The sequence is that of UPF0270 protein VP2791 from Vibrio parahaemolyticus serotype O3:K6 (strain RIMD 2210633).